A 451-amino-acid polypeptide reads, in one-letter code: MKDEQLYYFEKSPVFKAMMHFSLPMMIGTLLSVIYGILNIYFIGFLEDSHMISAISLTLPVFAILMGLGNLFGVGAGTYISRLLGAKDYSKSKFVSSFSIYGGIALGLIVILVALPFSDQIAAILGARGETLALTSNYLKVMFLSAPFVILFFILEQFARAIGAPMISMIGMLASVGLNIILDPILIFGFDLNVVGAALGTAISNVAAALFFIIYFMKNSDVVSVNIKLAKPNKEMLSEIFKIGIPAFLMSILMGFTGLVLNLFLAHYGNFAIASYGISFRLVQFPELIIMGLCEGVVPLIAYNFMSNKGRMKDVIKAVIMSIGVIFVVCMIAVFTIGHHMVGLFTTDQAIVEMATFILKVTMTSLLLNGIGFLFTGMLQATGQGRGATIMAILQGVVIIPVLFIMNALFGLTGVIWSLLIAESLCALAAMLIVYLLRDRLTVDTSELIEG.

12 consecutive transmembrane segments (helical) span residues 26-46 (MIGT…IGFL), 54-74 (AISL…LFGV), 97-117 (SFSI…ALPF), 139-159 (LKVM…EQFA), 170-190 (IGML…IFGF), 194-214 (VVGA…FFII), 245-265 (IPAF…NLFL), 282-302 (LVQF…PLIA), 318-338 (AVIM…FTIG), 355-375 (ATFI…GFLF), 397-417 (VVII…GVIW), and 418-438 (SLLI…YLLR).

Belongs to the multi antimicrobial extrusion (MATE) (TC 2.A.66.1) family. MepA subfamily.

Its subcellular location is the cell membrane. Its function is as follows. Multidrug resistance efflux protein. This Staphylococcus aureus (strain MRSA252) protein is Multidrug export protein MepA (mepA).